The chain runs to 2410 residues: Reducing polyketide synthase FUB1 (2410 aa).

Over residues 1 to 42 (MTLSNGSNGANGTSNGNGAHPSANGFHNAANGGANNGSANGG) the composition is skewed to low complexity. Positions 1–52 (MTLSNGSNGANGTSNGNGAHPSANGFHNAANGGANNGSANGGAEHDAGRPQV) are disordered. The Ketosynthase family 3 (KS3) domain maps to 57–479 (SSAIAVIGVS…GANAHAVLDD (423 aa)). Active-site for beta-ketoacyl synthase activity residues include Cys-230, His-365, and His-403. The segment at 608–929 (TFIFTGQGAQ…FSAIKRKQDA (322 aa)) is malonyl-CoA:ACP transacylase (MAT) domain. The active-site For malonyltransferase activity is Ser-699. The segment at 994 to 1127 (LELLGVRDPR…GLVSTSYKHD (134 aa)) is N-terminal hotdog fold. Residues 994 to 1307 (LELLGVRDPR…TVPLRGASDS (314 aa)) form the PKS/mFAS DH domain. A dehydratase (DH) domain region spans residues 995-1302 (ELLGVRDPRS…LKGCKTVPLR (308 aa)). Catalysis depends on His-1026, which acts as the Proton acceptor; for dehydratase activity. Residues 1155-1307 (LPSVDPTVFY…TVPLRGASDS (153 aa)) form a C-terminal hotdog fold region. Asp-1220 serves as the catalytic Proton donor; for dehydratase activity. Residues 1714 to 2026 (GLLDTLEYLS…SGGHVGKIVL (313 aa)) form an enoyl reductase (ER) domain region. Residues 2050-2226 (ATYVLIGGLG…AATSINLSLV (177 aa)) form a ketoreductase (KR) domain region. One can recognise a Carrier domain in the interval 2329–2406 (EVYEIVLQQL…GFTKKVMAKS (78 aa)). Residue Ser-2366 is modified to O-(pantetheine 4'-phosphoryl)serine.

It participates in mycotoxin biosynthesis. Its function is as follows. Reducing polyketide synthase; part of the gene cluster that mediates the biosynthesis of fusaric acid, a mycotoxin with low to moderate toxicity to animals and humans, but with high phytotoxic properties. L-aspartate is suggested as fusaric acid amino acid precursor that is activated and further processed to O-acetyl-L-homoserine by cluster enzymes aspartate kinase FUB3 and homoserine O-acetyltransferase FUB5, as well as enzymes of the primary metabolism. The polyketide synthase (PKS) FUB1 generates the triketide trans-2-hexenal which is presumptively released by the hydrolase FUB4 and linked to the NRPS-bound amino acid precursor by NAD(P)-dependent dehydrogenase FUB6. FUB1, FUB4, and the non-canonical NRPS Fub8 may form an enzyme complex. Further processing of the NRPS-bound intermediate might be carried out by FUB6 and the sulfhydrylase FUB7, enabling a spontaneous electrocyclization to close the carbon backbone of fusaric acid. Dihydrofusaric acid is likely to be released via reduction by the thioester reductase (TR) domain of FUB8 whereupon the final oxidation to fusaric acid may (also) be performed by the FMN-dependent dehydrogenase FUB9. The sequence is that of Reducing polyketide synthase FUB1 from Gibberella fujikuroi (strain CBS 195.34 / IMI 58289 / NRRL A-6831) (Bakanae and foot rot disease fungus).